The sequence spans 351 residues: Ferrochelatase (351 aa).

Fe cation contacts are provided by H221 and E302.

This sequence belongs to the ferrochelatase family.

The protein resides in the cytoplasm. It catalyses the reaction heme b + 2 H(+) = protoporphyrin IX + Fe(2+). Its pathway is porphyrin-containing compound metabolism; protoheme biosynthesis; protoheme from protoporphyrin-IX: step 1/1. In terms of biological role, catalyzes the ferrous insertion into protoporphyrin IX. The polypeptide is Ferrochelatase (Bradyrhizobium sp. (strain BTAi1 / ATCC BAA-1182)).